A 143-amino-acid chain; its full sequence is Large ribosomal subunit protein uL15 (143 aa).

The segment at 1–58 (MQLNDLRSAPGARREKHRPGRGIGSGLGKTGGRGHKGQTSRSGGSIAPGFEGGQQPLH) is disordered. A compositionally biased stretch (gly residues) spans 21–31 (RGIGSGLGKTG).

This sequence belongs to the universal ribosomal protein uL15 family. Part of the 50S ribosomal subunit.

Functionally, binds to the 23S rRNA. This is Large ribosomal subunit protein uL15 from Ectopseudomonas mendocina (strain ymp) (Pseudomonas mendocina).